The primary structure comprises 501 residues: Mitogen-activated protein kinase 16 (501 aa).

The 292-residue stretch at 22–313 (YEVTEVVGKG…AAEALTDPYF (292 aa)) folds into the Protein kinase domain. ATP-binding positions include 28-36 (VGKGSYGVV) and Lys-51. The active-site Proton acceptor is the Asp-148. Thr-184 is subject to Phosphothreonine. The TXY signature appears at 184-186 (TDY). At Tyr-186 the chain carries Phosphotyrosine. Residues 477 to 501 (DEESMSEYMNEAADGVPHKIAQLKT) form a disordered region.

This sequence belongs to the protein kinase superfamily. CMGC Ser/Thr protein kinase family. MAP kinase subfamily. Dually phosphorylated on Thr-184 and Tyr-186, which activates the enzyme.

It carries out the reaction L-seryl-[protein] + ATP = O-phospho-L-seryl-[protein] + ADP + H(+). The enzyme catalyses L-threonyl-[protein] + ATP = O-phospho-L-threonyl-[protein] + ADP + H(+). With respect to regulation, activated by threonine and tyrosine phosphorylation. The sequence is that of Mitogen-activated protein kinase 16 (MPK16) from Oryza sativa subsp. japonica (Rice).